Here is a 53-residue protein sequence, read N- to C-terminus: Light-harvesting protein B-800/850 alpha chain (53 aa).

The Cytoplasmic segment spans residues 1–14; it reads MNQGKIWTVVNPSV. The chain crosses the membrane as a helical span at residues 15-35; that stretch reads GLPLLLGSVTVIAILVHAAVL. Residue His31 participates in a bacteriochlorophyll binding. The Periplasmic segment spans residues 36–53; the sequence is SHTTWFPAYWQGGLKKAA.

This sequence belongs to the antenna complex alpha subunit family. The core complex is formed by different alpha and beta chains, binding bacteriochlorophyll molecules, and arranged most probably in tetrameric structures disposed around the reaction center. The non-pigmented gamma chains may constitute additional components.

Its subcellular location is the cell inner membrane. In terms of biological role, antenna complexes are light-harvesting systems, which transfer the excitation energy to the reaction centers. This chain is Light-harvesting protein B-800/850 alpha chain, found in Rhodoblastus acidophilus (Rhodopseudomonas acidophila).